Here is a 135-residue protein sequence, read N- to C-terminus: Interleukin-4 (135 aa).

Positions 1–24 (MGLTYQLIPVLVCLLVCTSHLVHG) are cleaved as a signal peptide. 3 disulfide bridges follow: C27-C135, C48-C85, and C70-C105. N-linked (GlcNAc...) asparagine glycosylation is present at N62.

The protein belongs to the IL-4/IL-13 family.

The protein resides in the secreted. Participates in at least several B-cell activation processes as well as of other cell types. It is a costimulator of DNA-synthesis. It induces the expression of class II MHC molecules on resting B-cells. It enhances both secretion and cell surface expression of IgE and IgG1. It also regulates the expression of the low affinity Fc receptor for IgE (CD23) on both lymphocytes and monocytes. Positively regulates IL31RA expression in macrophages. Stimulates autophagy in dendritic cells by interfering with mTORC1 signaling and through the induction of RUFY4. The polypeptide is Interleukin-4 (IL4) (Bubalus bubalis (Domestic water buffalo)).